The chain runs to 72 residues: Translation initiation factor IF-1 (72 aa).

The S1-like domain maps to 1 to 72 (MSKSDYIELE…TKGRITFRHK (72 aa)).

This sequence belongs to the IF-1 family. In terms of assembly, component of the 30S ribosomal translation pre-initiation complex which assembles on the 30S ribosome in the order IF-2 and IF-3, IF-1 and N-formylmethionyl-tRNA(fMet); mRNA recruitment can occur at any time during PIC assembly.

It is found in the cytoplasm. Its function is as follows. One of the essential components for the initiation of protein synthesis. Stabilizes the binding of IF-2 and IF-3 on the 30S subunit to which N-formylmethionyl-tRNA(fMet) subsequently binds. Helps modulate mRNA selection, yielding the 30S pre-initiation complex (PIC). Upon addition of the 50S ribosomal subunit IF-1, IF-2 and IF-3 are released leaving the mature 70S translation initiation complex. The sequence is that of Translation initiation factor IF-1 from Vesicomyosocius okutanii subsp. Calyptogena okutanii (strain HA).